The following is a 201-amino-acid chain: Glycerol-3-phosphate acyltransferase (201 aa).

A run of 5 helical transmembrane segments spans residues 5 to 25, 55 to 75, 87 to 107, 118 to 138, and 164 to 184; these read LLGA…FGVV, KMGV…ILVA, FWVT…VWLG, LGIF…GYAV, and TYGP…LIFV.

This sequence belongs to the PlsY family. As to quaternary structure, probably interacts with PlsX.

The protein localises to the cell inner membrane. It carries out the reaction an acyl phosphate + sn-glycerol 3-phosphate = a 1-acyl-sn-glycero-3-phosphate + phosphate. Its pathway is lipid metabolism; phospholipid metabolism. Catalyzes the transfer of an acyl group from acyl-phosphate (acyl-PO(4)) to glycerol-3-phosphate (G3P) to form lysophosphatidic acid (LPA). This enzyme utilizes acyl-phosphate as fatty acyl donor, but not acyl-CoA or acyl-ACP. This Anaeromyxobacter dehalogenans (strain 2CP-1 / ATCC BAA-258) protein is Glycerol-3-phosphate acyltransferase.